The following is a 78-amino-acid chain: Delta-conotoxin-like CVIE (78 aa).

The first 22 residues, 1 to 22 (MKLTCMMIVAVLFLTAWTFVTA), serve as a signal peptide directing secretion. Positions 23-49 (DDSRNGLKNLFPKARHEMKNPEASKLN) are excised as a propeptide. 3 disulfide bridges follow: C54/C69, C61/C73, and C68/C77. Residue P65 is modified to 4-hydroxyproline.

This sequence belongs to the conotoxin O1 superfamily. Expressed by the venom duct.

It localises to the secreted. Functionally, delta-conotoxins bind to site 6 of voltage-gated sodium channels (Nav) and inhibit the inactivation process. The protein is Delta-conotoxin-like CVIE of Conus catus (Cat cone).